The primary structure comprises 403 residues: Subtilisin-like protease CPC735_035780 (403 aa).

Residues 1-19 (MSIMKIATLFFAALSAVEA) form the signal peptide. Residues 20-117 (AKLLTPSDKR…VEPDRRVHLT (98 aa)) constitute a propeptide that is removed on maturation. Positions 35-116 (SYIVVMKDNV…YVEPDRRVHL (82 aa)) constitute an Inhibitor I9 domain. Residues 127–403 (SWGLGRISHR…NKLLYNNSGR (277 aa)) enclose the Peptidase S8 domain. Residues Asp159 and His190 each act as charge relay system in the active site. Asn233 and Asn251 each carry an N-linked (GlcNAc...) asparagine glycan. Residue Ser349 is the Charge relay system of the active site. N-linked (GlcNAc...) asparagine glycosylation is present at Asn399.

It belongs to the peptidase S8 family.

Its subcellular location is the secreted. In terms of biological role, secreted subtilisin-like serine protease with keratinolytic activity that contributes to pathogenicity. This is Subtilisin-like protease CPC735_035780 from Coccidioides posadasii (strain C735) (Valley fever fungus).